The sequence spans 645 residues: Zinc finger and SCAN domain-containing protein 2 (645 aa).

Disordered stretches follow at residues 1-25 (MMAAEIPRVTTPLSPLVQVPQEEDR), 37-75 (DDSWVQEAVLQEDGPESEPFPQSAGKGSPQEEVTRGPQG), and 193-230 (EMPEGESAQHSDGESDFERDAGIQRPQGHTPGKDHGEV). Residues 59–132 (SAGKGSPQEE…ALVEDLTQTL (74 aa)) form the SCAN box domain. Positions 199 to 214 (SAQHSDGESDFERDAG) are enriched in basic and acidic residues. 14 C2H2-type zinc fingers span residues 253–275 (YECPQCGKTFSRKSHLITHERTH), 281–303 (YKCDECGKSFSDGSNFSRHQTTH), 309–331 (YKCRDCGKSFSRSANLITHQRIH), 337–359 (FQCAECGKSFSRSPNLIAHQRTH), 365–387 (YSCPECGKSFGNRSSLNTHQGIH), 393–415 (YECKECGESFSYNSNLIRHQRIH), 421–443 (YKCTDCGQRFSQSSALITHRRTH), 449–471 (YQCSECGKNFSRSSNLATHRRTH), 477–499 (YKCGVCGKSFSQSSSLIAHQGMH), 505–527 (YECLTCGESFSWSSNLLKHQRIH), 533–555 (YKCSECGKCFSQRSQLVVHQQTH), 561–583 (YKCLMCGKSFSRGSILVMHQRAH), 589–611 (YRCPECGKGFSWNSVLIIHQRIH), and 617–639 (YKCPECGKGFSNSSNFITHQRTH).

Belongs to the krueppel C2H2-type zinc-finger protein family.

It localises to the nucleus. In terms of biological role, may be involved in transcriptional regulation during the post-meiotic stages of spermatogenesis. This chain is Zinc finger and SCAN domain-containing protein 2 (ZSCAN2), found in Pongo abelii (Sumatran orangutan).